The chain runs to 580 residues: YTH domain-containing family protein 2 (580 aa).

Positions 1 to 45 (MSASSLLEQRPKGQGNKVQNGSVHQKDGLNDDDFEPYLSPQARPN) are disordered. Serine 2 is modified (N-acetylserine). A phosphoserine mark is found at serine 2, serine 4, serine 5, serine 22, serine 39, and serine 196. The localization to mRNA processing bodies (P-bodies) stretch occupies residues 2–385 (SASSLLEQRP…QAGSGSTPSE (384 aa)). The segment at 247–388 (AKQQPKLKTK…SGSTPSEPHP (142 aa)) is disordered. A compositionally biased stretch (polar residues) spans 291 to 317 (ALVQNIGQQPTQGSPQPVGQQANNSPP). The span at 338-350 (AQLSVQQQAAQPT) shows a compositional bias: low complexity. A Phosphoserine modification is found at serine 360. Residues 360–372 (SGFGHNGVDGNGV) show a composition bias toward gly residues. Polar residues predominate over residues 373–384 (GQTQAGSGSTPS). An interaction with m6A-containing mRNAs region spans residues 386-580 (PHPVLEKLRS…VKKERQGRGK (195 aa)). A Phosphoserine modification is found at serine 395. One can recognise a YTH domain in the interval 411–545 (GRVFIIKSYS…EKAKQVLKII (135 aa)). Residues 417–419 (KSY), aspartate 423, 433–434 (WC), asparagine 463, tryptophan 487, and tryptophan 492 contribute to the RNA site.

Belongs to the YTHDF family. YTHDF2 subfamily. As to quaternary structure, interacts with CNOT1; interaction is direct and promotes recruitment of the CCR4-NOT complex. Interacts with YTHDF3. Interacts with RIDA/HRSP12; interaction leads to recruitment of the ribonuclease P/MRP complex. Ubiquitinated by the SCF(SKP2) complex, leading to its degradation.

The protein localises to the cytoplasm. It is found in the cytosol. Its subcellular location is the P-body. It localises to the stress granule. The protein resides in the nucleus. Specifically recognizes and binds N6-methyladenosine (m6A)-containing RNAs, and regulates their stability. M6A is a modification present at internal sites of mRNAs and some non-coding RNAs and plays a role in mRNA stability and processing. Acts as a regulator of mRNA stability by promoting degradation of m6A-containing mRNAs via interaction with the CCR4-NOT and ribonuclease P/MRP complexes, depending on the context. The YTHDF paralogs (YTHDF1, YTHDF2 and YTHDF3) share m6A-containing mRNAs targets and act redundantly to mediate mRNA degradation and cellular differentiation. M6A-containing mRNAs containing a binding site for RIDA/HRSP12 (5'-GGUUC-3') are preferentially degraded by endoribonucleolytic cleavage: cooperative binding of RIDA/HRSP12 and YTHDF2 to transcripts leads to recruitment of the ribonuclease P/MRP complex. Other m6A-containing mRNAs undergo deadenylation via direct interaction between YTHDF2 and CNOT1, leading to recruitment of the CCR4-NOT and subsequent deadenylation of m6A-containing mRNAs. Required maternally to regulate oocyte maturation: probably acts by binding to m6A-containing mRNAs, thereby regulating maternal transcript dosage during oocyte maturation, which is essential for the competence of oocytes to sustain early zygotic development. Also required during spermatogenesis: regulates spermagonial adhesion by promoting degradation of m6A-containing transcripts coding for matrix metallopeptidases. Also involved in hematopoietic stem cells specification by binding to m6A-containing mRNAs, leading to promote their degradation. Also acts as a regulator of neural development by promoting m6A-dependent degradation of neural development-related mRNA targets. Inhibits neural specification of induced pluripotent stem cells by binding to methylated neural-specific mRNAs and promoting their degradation, thereby restraining neural differentiation. Regulates circadian regulation of hepatic lipid metabolism: acts by promoting m6A-dependent degradation of PPARA transcripts. Regulates the innate immune response to infection by inhibiting the type I interferon response: acts by binding to m6A-containing IFNB transcripts and promoting their degradation. May also act as a promoter of cap-independent mRNA translation following heat shock stress: upon stress, relocalizes to the nucleus and specifically binds mRNAs with some m6A methylation mark at their 5'-UTR, protecting demethylation of mRNAs by FTO, thereby promoting cap-independent mRNA translation. Regulates mitotic entry by promoting the phase-specific m6A-dependent degradation of WEE1 transcripts. Promotes formation of phase-separated membraneless compartments, such as P-bodies or stress granules, by undergoing liquid-liquid phase separation upon binding to mRNAs containing multiple m6A-modified residues: polymethylated mRNAs act as a multivalent scaffold for the binding of YTHDF proteins, juxtaposing their disordered regions and thereby leading to phase separation. The resulting mRNA-YTHDF complexes then partition into different endogenous phase-separated membraneless compartments, such as P-bodies, stress granules or neuronal RNA granules. May also recognize and bind RNAs modified by C5-methylcytosine (m5C) and act as a regulator of rRNA processing. The sequence is that of YTH domain-containing family protein 2 from Bos taurus (Bovine).